Reading from the N-terminus, the 20-residue chain is uncharacterized protein (20 aa).

This is an uncharacterized protein from Serratia marcescens.